A 173-amino-acid chain; its full sequence is Thiol-disulfide oxidoreductase ResA (173 aa).

A helical; Signal-anchor for type II membrane protein membrane pass occupies residues 10–29; sequence VIILLILSGAVGFTLYQGYF. The Thioredoxin domain maps to 35–173; that stretch reads MEIGKEAPNF…LEEYLKKITP (139 aa). A disulfide bridge links C73 with C76.

Belongs to the thioredoxin family. ResA subfamily.

It is found in the cell membrane. The protein operates within protein modification; cytochrome c assembly. Its function is as follows. Thiol-disulfide oxidoreductase which is required in disulfide reduction during c-type cytochrome synthesis. May accept reducing equivalents from CcdA, leading to breakage of disulfide bonds in apocytochrome c; following this reduction heme can be covalently attached. The chain is Thiol-disulfide oxidoreductase ResA from Bacillus cereus (strain ATCC 10987 / NRS 248).